The chain runs to 81 residues: Photosystem I iron-sulfur center (81 aa).

2 consecutive 4Fe-4S ferredoxin-type domains span residues 2-31 and 37-68; these read SHAV…MVPW and GQIA…IRVY. Cys11, Cys14, Cys17, Cys21, Cys48, Cys51, Cys54, and Cys58 together coordinate [4Fe-4S] cluster.

The cyanobacterial PSI reaction center is composed of one copy each of PsaA,B,C,D,E,F,I,J,K,L,M and X, and forms trimeric complexes. [4Fe-4S] cluster serves as cofactor.

The protein localises to the cellular thylakoid membrane. The enzyme catalyses reduced [plastocyanin] + hnu + oxidized [2Fe-2S]-[ferredoxin] = oxidized [plastocyanin] + reduced [2Fe-2S]-[ferredoxin]. Apoprotein for the two 4Fe-4S centers FA and FB of photosystem I (PSI); essential for photochemical activity. FB is the terminal electron acceptor of PSI, donating electrons to ferredoxin. The C-terminus interacts with PsaA/B/D and helps assemble the protein into the PSI complex. Required for binding of PsaD and PsaE to PSI. PSI is a plastocyanin/cytochrome c6-ferredoxin oxidoreductase, converting photonic excitation into a charge separation, which transfers an electron from the donor P700 chlorophyll pair to the spectroscopically characterized acceptors A0, A1, FX, FA and FB in turn. This chain is Photosystem I iron-sulfur center, found in Synechococcus sp. (strain WH8103).